Reading from the N-terminus, the 96-residue chain is Integration host factor subunit beta (96 aa).

It belongs to the bacterial histone-like protein family. In terms of assembly, heterodimer of an alpha and a beta chain.

Functionally, this protein is one of the two subunits of integration host factor, a specific DNA-binding protein that functions in genetic recombination as well as in transcriptional and translational control. This Photobacterium profundum (strain SS9) protein is Integration host factor subunit beta.